A 267-amino-acid chain; its full sequence is Formamidopyrimidine-DNA glycosylase (267 aa).

P2 (schiff-base intermediate with DNA) is an active-site residue. E3 acts as the Proton donor in catalysis. The active-site Proton donor; for beta-elimination activity is K53. DNA-binding residues include H82 and R100. The FPG-type zinc-finger motif lies at 230-264 (AVYGREGLPCPACGRPVERRVVAGRGTHFCPTCQG). The active-site Proton donor; for delta-elimination activity is the R254.

Belongs to the FPG family. In terms of assembly, monomer. The cofactor is Zn(2+).

It carries out the reaction Hydrolysis of DNA containing ring-opened 7-methylguanine residues, releasing 2,6-diamino-4-hydroxy-5-(N-methyl)formamidopyrimidine.. The enzyme catalyses 2'-deoxyribonucleotide-(2'-deoxyribose 5'-phosphate)-2'-deoxyribonucleotide-DNA = a 3'-end 2'-deoxyribonucleotide-(2,3-dehydro-2,3-deoxyribose 5'-phosphate)-DNA + a 5'-end 5'-phospho-2'-deoxyribonucleoside-DNA + H(+). Functionally, involved in base excision repair of DNA damaged by oxidation or by mutagenic agents. Acts as a DNA glycosylase that recognizes and removes damaged bases. Has a preference for oxidized purines, such as 7,8-dihydro-8-oxoguanine (8-oxoG). Has AP (apurinic/apyrimidinic) lyase activity and introduces nicks in the DNA strand. Cleaves the DNA backbone by beta-delta elimination to generate a single-strand break at the site of the removed base with both 3'- and 5'-phosphates. The polypeptide is Formamidopyrimidine-DNA glycosylase (Thermus thermophilus (strain ATCC BAA-163 / DSM 7039 / HB27)).